Reading from the N-terminus, the 77-residue chain is MPKRVLQGVVISSKTDKTVTVKVERKFKHPIYKKFVKVSKKYAAHDIENKYKEGDKVSIVESRPISKTKTWVVLNLE.

The protein belongs to the universal ribosomal protein uS17 family. As to quaternary structure, part of the 30S ribosomal subunit.

In terms of biological role, one of the primary rRNA binding proteins, it binds specifically to the 5'-end of 16S ribosomal RNA. This Rickettsia prowazekii (strain Madrid E) protein is Small ribosomal subunit protein uS17.